A 450-amino-acid polypeptide reads, in one-letter code: Neutral protease 2 homolog AFUB_070680 (450 aa).

The signal sequence occupies residues Met1–Ala19. Residues Leu20–Arg172 constitute a propeptide that is removed on maturation. 2 disulfides stabilise this stretch: Cys179–Cys251 and Cys258–Cys276. A Zn(2+)-binding site is contributed by His300. The active site involves Glu301. Zn(2+)-binding residues include His304 and Asp315. A compositionally biased stretch (polar residues) spans Gln364–Met392. The tract at residues Gln364 to Pro416 is disordered. A compositionally biased stretch (low complexity) spans Gln398 to Thr409.

This sequence belongs to the peptidase M35 family. Requires Zn(2+) as cofactor.

It is found in the secreted. The catalysed reaction is Preferential cleavage of bonds with hydrophobic residues in P1'. Also 3-Asn-|-Gln-4 and 8-Gly-|-Ser-9 bonds in insulin B chain.. Secreted metalloproteinase that allows assimilation of proteinaceous substrates. Shows high activities on basic nuclear substrates such as histone and protamine. May be involved in virulence. This Aspergillus fumigatus (strain ATCC MYA-4609 / CBS 101355 / FGSC A1100 / Af293) (Neosartorya fumigata) protein is Neutral protease 2 homolog AFUB_070680.